The chain runs to 316 residues: MNQLDGIKQFTTVVADSGDIESIRHYQPQDATTNPSLLLKAAGLEQYGHLIEDAIAWGKKHGGTQEQQVAAASDKLAVNFGAEILKSIPGRVSTEVDARLSFDKEKSIEKARHLVGLYQQQGIDKSRILIKLAATWEGIRAAGQLEKEGINCNLTLLFSFAQARACAEAGVYLISPFVGRIYDWYQARSPLEPYVVEEDPGVKSVRNIYDYFKQHRYETIVMGASFRRTEQILALTGCDRLTISPNLLKELKEKEEPVIRKLVPSSQMFHRPTSMTEAEFRWEHNQDAMAVEKLSEGIRLFAVDQRKLEDLLAAKL.

Lysine 131 acts as the Schiff-base intermediate with substrate in catalysis.

This sequence belongs to the transaldolase family. Type 1 subfamily. As to quaternary structure, homodimer.

The protein resides in the cytoplasm. The catalysed reaction is D-sedoheptulose 7-phosphate + D-glyceraldehyde 3-phosphate = D-erythrose 4-phosphate + beta-D-fructose 6-phosphate. Its pathway is carbohydrate degradation; pentose phosphate pathway; D-glyceraldehyde 3-phosphate and beta-D-fructose 6-phosphate from D-ribose 5-phosphate and D-xylulose 5-phosphate (non-oxidative stage): step 2/3. Transaldolase is important for the balance of metabolites in the pentose-phosphate pathway. The polypeptide is Transaldolase 2 (Salmonella paratyphi A (strain ATCC 9150 / SARB42)).